The following is a 243-amino-acid chain: Segregation and condensation protein A (243 aa).

This sequence belongs to the ScpA family. Component of a cohesin-like complex composed of ScpA, ScpB and the Smc homodimer, in which ScpA and ScpB bind to the head domain of Smc. The presence of the three proteins is required for the association of the complex with DNA.

The protein localises to the cytoplasm. Its function is as follows. Participates in chromosomal partition during cell division. May act via the formation of a condensin-like complex containing Smc and ScpB that pull DNA away from mid-cell into both cell halves. The sequence is that of Segregation and condensation protein A from Halothermothrix orenii (strain H 168 / OCM 544 / DSM 9562).